The following is an 892-amino-acid chain: Bifunctional uridylyltransferase/uridylyl-removing enzyme (892 aa).

The tract at residues 1-348 is uridylyltransferase; sequence MPNFTGNTRP…LVDAKVHVRP (348 aa). The tract at residues 349-710 is uridylyl-removing; sequence INERFQARNG…RIHNQEPGTM (362 aa). The region spanning 467–589 is the HD domain; that stretch reads VDEHTLFLIH…VGDERRLNHL (123 aa). ACT domains are found at residues 711-786 and 822-892; these read EVFI…LTQP and VMEL…YLER.

It belongs to the GlnD family. It depends on Mg(2+) as a cofactor.

It catalyses the reaction [protein-PII]-L-tyrosine + UTP = [protein-PII]-uridylyl-L-tyrosine + diphosphate. The enzyme catalyses [protein-PII]-uridylyl-L-tyrosine + H2O = [protein-PII]-L-tyrosine + UMP + H(+). With respect to regulation, uridylyltransferase (UTase) activity is inhibited by glutamine, while glutamine activates uridylyl-removing (UR) activity. Functionally, modifies, by uridylylation and deuridylylation, the PII regulatory proteins (GlnB and homologs), in response to the nitrogen status of the cell that GlnD senses through the glutamine level. Under low glutamine levels, catalyzes the conversion of the PII proteins and UTP to PII-UMP and PPi, while under higher glutamine levels, GlnD hydrolyzes PII-UMP to PII and UMP (deuridylylation). Thus, controls uridylylation state and activity of the PII proteins, and plays an important role in the regulation of nitrogen assimilation and metabolism. In Nitrosococcus oceani (strain ATCC 19707 / BCRC 17464 / JCM 30415 / NCIMB 11848 / C-107), this protein is Bifunctional uridylyltransferase/uridylyl-removing enzyme.